A 157-amino-acid chain; its full sequence is Transcription antitermination protein NusB (157 aa).

Belongs to the NusB family.

Functionally, involved in transcription antitermination. Required for transcription of ribosomal RNA (rRNA) genes. Binds specifically to the boxA antiterminator sequence of the ribosomal RNA (rrn) operons. The sequence is that of Transcription antitermination protein NusB from Xylella fastidiosa (strain Temecula1 / ATCC 700964).